Here is a 295-residue protein sequence, read N- to C-terminus: Probable endonuclease 4 (295 aa).

Positions 78, 118, 154, 188, 191, 225, 238, 240, and 270 each coordinate Zn(2+).

This sequence belongs to the AP endonuclease 2 family. Zn(2+) serves as cofactor.

It carries out the reaction Endonucleolytic cleavage to 5'-phosphooligonucleotide end-products.. Endonuclease IV plays a role in DNA repair. It cleaves phosphodiester bonds at apurinic or apyrimidinic (AP) sites, generating a 3'-hydroxyl group and a 5'-terminal sugar phosphate. This chain is Probable endonuclease 4, found in Vibrio campbellii (strain ATCC BAA-1116).